Here is a 61-residue protein sequence, read N- to C-terminus: Large ribosomal subunit protein uL29 (61 aa).

This sequence belongs to the universal ribosomal protein uL29 family.

The chain is Large ribosomal subunit protein uL29 from Campylobacter curvus (strain 525.92).